A 146-amino-acid chain; its full sequence is MADSTARTVKDVNPHEFVKAYSAHLKRSGKMELPEWVDIVKTARFKELPPYDPDWYYTRAASIARKIYLRQGIGVGGFQKIYGGRQRNGSRPPHFCKSSGAISRNILQQLQKMGIIDVDPKGGRLITSQGRRDLDQVAGRVDVTIA.

Belongs to the eukaryotic ribosomal protein eS19 family.

The polypeptide is Small ribosomal subunit protein eS19 (RPS19A) (Oryza sativa subsp. japonica (Rice)).